Here is a 336-residue protein sequence, read N- to C-terminus: PHD finger protein 11 (336 aa).

The tract at residues 1-20 (MAEETAPPCGPVSTGGSLSP) is disordered. A C2HC pre-PHD-type zinc finger spans residues 25–61 (KRTCALCPDGHEWSVIYFAPSANIAAHENCLLYSSGL). Residues 91–143 (LKCSLCNKGGATVGCDLSSCRKSYHYVCAKKDHAIPQVDEDLGTYKIFCPEHP) form a PHD-type zinc finger. 2 disordered regions span residues 139 to 179 (CPEH…KKMK) and 303 to 336 (DPSGSTSGSLLPPEDHQCRCQESPEVQAGSGDSL). Over residues 303 to 314 (DPSGSTSGSLLP) the composition is skewed to low complexity.

As to quaternary structure, interacts with BRCA1 and RELA.

It localises to the nucleus. Functionally, positive regulator of Th1-type cytokine gene expression. In Rattus norvegicus (Rat), this protein is PHD finger protein 11 (Phf11).